The following is a 496-amino-acid chain: Thiamine transporter 2 (496 aa).

The Cytoplasmic segment spans residues 1 to 7; sequence MDCYRTS. The chain crosses the membrane as a helical span at residues 8-28; it reads LSSSWIYPTVILCLFGFFSMM. The Extracellular portion of the chain corresponds to 29 to 53; the sequence is RPSEPFLIPYLSGPDKNLTSAEITN. Asparagine 45 carries N-linked (GlcNAc...) asparagine glycosylation. The chain crosses the membrane as a helical span at residues 54-74; it reads EIFPVWTYSYLVLLLPVFVLT. Topologically, residues 75–81 are cytoplasmic; sequence DYVRYKP. The chain crosses the membrane as a helical span at residues 82–102; that stretch reads VIILQGISFIITWLLLLFGQG. Over 103 to 110 the chain is Extracellular; sequence VKTMQVVE. Residues 111–131 traverse the membrane as a helical segment; the sequence is FFYGMVTAAEVAYYAYIYSVV. Over 132–144 the chain is Cytoplasmic; sequence SPEHYQRVSGYCR. The helical transmembrane segment at 145–165 threads the bilayer; the sequence is SVTLAAYTAGSVLAQLLVSLA. N-linked (GlcNAc...) asparagine glycosylation is present at asparagine 166. The Extracellular segment spans residues 166-169; the sequence is NMSY. Residues 170–190 traverse the membrane as a helical segment; it reads FYLNVISLASVSVAFLFSLFL. The Cytoplasmic portion of the chain corresponds to 191-282; it reads PMPKKSMFFH…YSSKRLFYWS (92 aa). The helical transmembrane segment at 283 to 303 threads the bilayer; it reads LWWAFATAGFNQVLNYVQILW. Topologically, residues 304–316 are extracellular; that stretch reads DYKAPSQDSSIYN. Residues 317 to 337 form a helical membrane-spanning segment; it reads GAVEAIATFGGAVAAFAVGYV. Residues 338-342 lie on the Cytoplasmic side of the membrane; it reads KVNWD. The helical transmembrane segment at 343-363 threads the bilayer; it reads LLGELALVVFSVVNAGSLFLM. Residues 364 to 375 are Extracellular-facing; that stretch reads HYTANIWACYAG. Residues 376–396 traverse the membrane as a helical segment; the sequence is YLIFKSSYMLLITIAVFQIAV. Residues 397-405 are Cytoplasmic-facing; it reads NLNVERYAL. Residues 406–426 traverse the membrane as a helical segment; that stretch reads VFGINTFIALVIQTIMTVIVV. Over 427 to 434 the chain is Extracellular; it reads DQRGLNLP. Residues 435 to 455 form a helical membrane-spanning segment; the sequence is VSIQFLVYGSYFAVIAGIFLM. Topologically, residues 456-496 are cytoplasmic; the sequence is RSMYITYSTKSQKDVQSPAPSENPDVSHPEEESNIIMSTKL. Positions 468–496 are disordered; it reads KDVQSPAPSENPDVSHPEEESNIIMSTKL.

This sequence belongs to the reduced folate carrier (RFC) transporter (TC 2.A.48) family. In terms of tissue distribution, widely expressed but most abundant in placenta, kidney and liver.

Its subcellular location is the membrane. The catalysed reaction is thiamine(out) + H(+)(in) = thiamine(in) + H(+)(out). It catalyses the reaction pyridoxine(out) + n H(+)(out) = pyridoxine(in) + n H(+)(in). Pyridoxine transport is inhibited by carbonyl cyanide p-trifluoromethoxyphenylhydrazone (FCCP) and carbonyl cyanide m-chlorophenylhydrazone (CCCP). Its function is as follows. Mediates high affinity thiamine uptake, probably via a proton anti-port mechanism. Has no folate transport activity. Mediates H(+)-dependent pyridoxine transport. In Homo sapiens (Human), this protein is Thiamine transporter 2 (SLC19A3).